Reading from the N-terminus, the 218-residue chain is NAD(P)H-quinone oxidoreductase subunit I (218 aa).

4Fe-4S ferredoxin-type domains lie at 55–84 (GRIHYEFDKCIACEVCVRVCPINLPVVDWV) and 95–124 (RNYSIDFGACIFCGNCVEYCPTNCLSMTEE). 8 residues coordinate [4Fe-4S] cluster: C64, C67, C70, C74, C104, C107, C110, and C114. A disordered region spans residues 179–218 (LRAGKLPSQIIKELQADKSEEEGKNNSSDMVPNKLNSTNK). A compositionally biased stretch (basic and acidic residues) spans 192–202 (LQADKSEEEGK). The segment covering 203–218 (NNSSDMVPNKLNSTNK) has biased composition (polar residues).

This sequence belongs to the complex I 23 kDa subunit family. In terms of assembly, NDH-1 is composed of at least 11 different subunits. The cofactor is [4Fe-4S] cluster.

It is found in the cellular thylakoid membrane. It carries out the reaction a plastoquinone + NADH + (n+1) H(+)(in) = a plastoquinol + NAD(+) + n H(+)(out). It catalyses the reaction a plastoquinone + NADPH + (n+1) H(+)(in) = a plastoquinol + NADP(+) + n H(+)(out). NDH-1 shuttles electrons from an unknown electron donor, via FMN and iron-sulfur (Fe-S) centers, to quinones in the respiratory and/or the photosynthetic chain. The immediate electron acceptor for the enzyme in this species is believed to be plastoquinone. Couples the redox reaction to proton translocation, and thus conserves the redox energy in a proton gradient. The polypeptide is NAD(P)H-quinone oxidoreductase subunit I (Prochlorococcus marinus (strain NATL2A)).